The following is a 187-amino-acid chain: Accessory gene regulator protein B (187 aa).

The next 5 membrane-spanning stretches (helical) occupy residues 49–69 (LAYI…FYLI), 82–102 (FWCY…VLHF), 107–127 (TLMM…APAA), 143–163 (YFSI…KEPY), and 164–184 (TQFI…IYYS).

It belongs to the AgrB family.

The protein localises to the cell membrane. In terms of biological role, essential for the production of a quorum sensing system signal molecule, the autoinducing peptide (AIP). This quorum sensing system is responsible for the regulation of the expression of virulence factor genes. Involved in the proteolytic processing of AgrD, the precursor of AIP. The sequence is that of Accessory gene regulator protein B from Staphylococcus aureus (strain MRSA252).